The primary structure comprises 353 residues: MLYWLSEILHINILGYITIRAGIAFFLALFFTLFLMPRFIRWAQSTSSHQPINEWAPQRHQGKAKTPTMGGIVFIFATILASLISIKFSNLYAVGAVLTLIFFSIIGFKDDIAKIKKNENLAGLKAKTKLILQTTFALIISIFLYTLSDFNTSLYVPFLKNPLFDMGIFAIFFWVIVIIATSNAVNLTDGLDGLATVPSITALASFSIIIYITGNVTMSSYLLMPNINIGEVAIVSSALIGALSGFLWYNCHPAEVFMGDSGSLTIGAFLGYLAIISKSEILLLLIGSIFVIETLSVILQVGSYKLRKKRVFLMAPIHHHFEMKNWAENKIIVRFWIIATLSNVIALITLKIR.

The next 10 membrane-spanning stretches (helical) occupy residues I13–L33, T66–I86, F88–F108, L130–F150, P162–S182, G193–T213, I229–Y249, V256–I276, I281–V301, and K330–L350.

It belongs to the glycosyltransferase 4 family. MraY subfamily. Mg(2+) serves as cofactor.

The protein resides in the cell inner membrane. The enzyme catalyses UDP-N-acetyl-alpha-D-muramoyl-L-alanyl-gamma-D-glutamyl-meso-2,6-diaminopimeloyl-D-alanyl-D-alanine + di-trans,octa-cis-undecaprenyl phosphate = di-trans,octa-cis-undecaprenyl diphospho-N-acetyl-alpha-D-muramoyl-L-alanyl-D-glutamyl-meso-2,6-diaminopimeloyl-D-alanyl-D-alanine + UMP. The protein operates within cell wall biogenesis; peptidoglycan biosynthesis. Its function is as follows. Catalyzes the initial step of the lipid cycle reactions in the biosynthesis of the cell wall peptidoglycan: transfers peptidoglycan precursor phospho-MurNAc-pentapeptide from UDP-MurNAc-pentapeptide onto the lipid carrier undecaprenyl phosphate, yielding undecaprenyl-pyrophosphoryl-MurNAc-pentapeptide, known as lipid I. The polypeptide is Phospho-N-acetylmuramoyl-pentapeptide-transferase (Sulfurimonas denitrificans (strain ATCC 33889 / DSM 1251) (Thiomicrospira denitrificans (strain ATCC 33889 / DSM 1251))).